Here is a 100-residue protein sequence, read N- to C-terminus: Bombyxin A-2 homolog (100 aa).

A signal peptide spans 1 to 18 (MRTQVLFLIVVLAVMASG). 3 cysteine pairs are disulfide-bonded: C26–C85, C38–C98, and C84–C89. A propeptide spans 47-75 (PPYISSENEGYGWKWLERQRARQLDEARG) (c peptide like).

It belongs to the insulin family. As to quaternary structure, heterodimer of a B chain and an A chain linked by two disulfide bonds.

It is found in the secreted. In terms of biological role, brain peptide responsible for activation of prothoracic glands to produce ecdysone in insects. This Samia cynthia (Ailanthus silkmoth) protein is Bombyxin A-2 homolog (SBXA2).